Reading from the N-terminus, the 724-residue chain is Long-chain-fatty-acid--CoA ligase ACSBG1 (724 aa).

A disordered region spans residues 1–30 (MPRNSGAGYGCPHGDPSMLDSRETPQESRQ). Positions 20-30 (DSRETPQESRQ) are enriched in basic and acidic residues. A phosphoserine mark is found at Ser53 and Ser56. ATP contacts are provided by residues 282 to 290 (TSGTTGNPK), 472 to 477 (AGYGLS), Asp550, and Arg565. The residue at position 658 (Tyr658) is a Phosphotyrosine. Lys701 is an ATP binding site.

It belongs to the ATP-dependent AMP-binding enzyme family. Bubblegum subfamily. As to expression, expressed primarily in brain. Expressed at lower level in testis and adrenal gland. Present in all regions of brain except pituitary.

It is found in the cytoplasm. It localises to the cytoplasmic vesicle. Its subcellular location is the microsome. The protein resides in the endoplasmic reticulum. The protein localises to the cell membrane. The catalysed reaction is a long-chain fatty acid + ATP + CoA = a long-chain fatty acyl-CoA + AMP + diphosphate. It carries out the reaction (E)-hexadec-2-enoate + ATP + CoA = (2E)-hexadecenoyl-CoA + AMP + diphosphate. It catalyses the reaction hexadecanoate + ATP + CoA = hexadecanoyl-CoA + AMP + diphosphate. Catalyzes the conversion of fatty acids such as long-chain and very long-chain fatty acids to their active form acyl-CoAs for both synthesis of cellular lipids, and degradation via beta-oxidation. Can activate diverse saturated, monosaturated and polyunsaturated fatty acids. The polypeptide is Long-chain-fatty-acid--CoA ligase ACSBG1 (Homo sapiens (Human)).